Reading from the N-terminus, the 314-residue chain is Jacalin-related lectin 9 (314 aa).

The N-terminal stretch at Met-1–Ala-23 is a signal peptide. Jacalin-type lectin domains lie at Gln-24–Lys-165 and Pro-168–Pro-313.

It belongs to the jacalin lectin family.

The polypeptide is Jacalin-related lectin 9 (JAL9) (Arabidopsis thaliana (Mouse-ear cress)).